The primary structure comprises 312 residues: Formimidoylglutamase (312 aa).

Positions 128, 153, 155, 157, 240, and 242 each coordinate Mn(2+).

Belongs to the arginase family. Requires Mn(2+) as cofactor.

The enzyme catalyses N-formimidoyl-L-glutamate + H2O = formamide + L-glutamate. The protein operates within amino-acid degradation; L-histidine degradation into L-glutamate; L-glutamate from N-formimidoyl-L-glutamate (hydrolase route): step 1/1. Functionally, catalyzes the conversion of N-formimidoyl-L-glutamate to L-glutamate and formamide. The sequence is that of Formimidoylglutamase from Enterobacter sp. (strain 638).